The following is a 904-amino-acid chain: Protein translocase subunit SecA (904 aa).

ATP-binding positions include Gln-89, 107–111 (GEGKT), and Asp-502. The disordered stretch occupies residues 872 to 892 (VESDPTTWGEPSRNDPCPCGS). Zn(2+)-binding residues include Cys-888, Cys-890, Cys-899, and His-900.

This sequence belongs to the SecA family. As to quaternary structure, part of the essential protein translocation apparatus which comprises SecA, SecYEG and auxiliary proteins SecDF-YajC and YidC. Homodimer. The cofactor is Zn(2+).

It is found in the cell inner membrane. The protein resides in the cytoplasm. The catalysed reaction is ATP + H2O + cellular proteinSide 1 = ADP + phosphate + cellular proteinSide 2.. Its function is as follows. Part of the Sec protein translocase complex. Interacts with the SecYEG preprotein conducting channel. Has a central role in coupling the hydrolysis of ATP to the transfer of proteins into and across the cell membrane, serving both as a receptor for the preprotein-SecB complex and as an ATP-driven molecular motor driving the stepwise translocation of polypeptide chains across the membrane. In Rhodobacter capsulatus (Rhodopseudomonas capsulata), this protein is Protein translocase subunit SecA.